Here is a 1070-residue protein sequence, read N- to C-terminus: DNA-directed RNA polymerase subunit beta (1070 aa).

Belongs to the RNA polymerase beta chain family. In plastids the minimal PEP RNA polymerase catalytic core is composed of four subunits: alpha, beta, beta', and beta''. When a (nuclear-encoded) sigma factor is associated with the core the holoenzyme is formed, which can initiate transcription.

The protein localises to the plastid. Its subcellular location is the chloroplast. It catalyses the reaction RNA(n) + a ribonucleoside 5'-triphosphate = RNA(n+1) + diphosphate. Its function is as follows. DNA-dependent RNA polymerase catalyzes the transcription of DNA into RNA using the four ribonucleoside triphosphates as substrates. The sequence is that of DNA-directed RNA polymerase subunit beta from Gossypium hirsutum (Upland cotton).